We begin with the raw amino-acid sequence, 406 residues long: Vacuole membrane protein 1 (406 aa).

Residues Met1–Gly22 form a disordered region. The Cytoplasmic portion of the chain corresponds to Met1–Gln42. Residues Ser43–Ile63 traverse the membrane as a helical segment. At Asn64 to Arg76 the chain is on the extracellular side. A helical membrane pass occupies residues Met77–Gly97. At Glu98–Cys110 the chain is on the cytoplasmic side. Residues Leu111–Leu131 form a helical membrane-spanning segment. The Extracellular segment spans residues His132 to Asn250. Residues Gly173 to Ile316 are VTT domain. The chain crosses the membrane as a helical span at residues Leu251 to Phe271. Residues Asp272–Leu273 lie on the Cytoplasmic side of the membrane. The chain crosses the membrane as a helical span at residues Ala274–Ile294. Residues Gly295–Leu306 lie on the Extracellular side of the membrane. Residues Phe307–Ile327 form a helical membrane-spanning segment. Over Pro328–Trp363 the chain is Cytoplasmic. The helical transmembrane segment at Leu364 to Ile384 threads the bilayer. Residues Asn385–Lys406 are Extracellular-facing.

This sequence belongs to the VMP1 family.

It localises to the endoplasmic reticulum-Golgi intermediate compartment membrane. The protein localises to the cell membrane. The protein resides in the vacuole membrane. Its subcellular location is the endoplasmic reticulum membrane. The enzyme catalyses a 1,2-diacyl-sn-glycero-3-phospho-L-serine(in) = a 1,2-diacyl-sn-glycero-3-phospho-L-serine(out). It carries out the reaction cholesterol(in) = cholesterol(out). It catalyses the reaction a 1,2-diacyl-sn-glycero-3-phosphocholine(in) = a 1,2-diacyl-sn-glycero-3-phosphocholine(out). The catalysed reaction is a 1,2-diacyl-sn-glycero-3-phosphoethanolamine(in) = a 1,2-diacyl-sn-glycero-3-phosphoethanolamine(out). Phospholipid scramblase involved in lipid homeostasis and membrane dynamics processes. Has phospholipid scramblase activity toward cholesterol and phosphatidylserine, as well as phosphatidylethanolamine and phosphatidylcholine. Required for autophagosome formation: participates in early stages of autophagosome biogenesis at the endoplasmic reticulum (ER) membrane by reequilibrating the leaflets of the ER as lipids are extracted by atg2 (atg2a or atg2b) to mediate autophagosome assembly. In addition to autophagy, involved in other processes in which phospholipid scramblase activity is required. Modulates ER contacts with lipid droplets, mitochondria and endosomes. The sequence is that of Vacuole membrane protein 1 from Xenopus laevis (African clawed frog).